A 607-amino-acid chain; its full sequence is Chaperone protein DnaK (607 aa).

Residue T174 is modified to Phosphothreonine; by autocatalysis. Residues 571–607 (AAMYQKQAQQQQPGPGPDAGKDKDDKDKTVDADYEVK) are disordered. Basic and acidic residues predominate over residues 589–607 (AGKDKDDKDKTVDADYEVK).

Belongs to the heat shock protein 70 family.

Functionally, acts as a chaperone. The sequence is that of Chaperone protein DnaK from Desulforudis audaxviator (strain MP104C).